A 251-amino-acid chain; its full sequence is Metallo-beta-lactamase domain-containing protein 1 (251 aa).

Zn(2+) contacts are provided by His118, His120, Asp122, His123, His173, Asp196, and His235.

It belongs to the metallo-beta-lactamase superfamily. Glyoxalase II family. As to quaternary structure, homodimer. It depends on Zn(2+) as a cofactor.

It localises to the cytoplasm. It is found in the cytosol. The protein localises to the nucleus. The enzyme catalyses a ribonucleotidyl-ribonucleotide-RNA + H2O = a 3'-end ribonucleotide-RNA + a 5'-end 5'-phospho-ribonucleoside-RNA + H(+). Its function is as follows. Endoribonuclease that catalyzes the hydrolysis of histone-coding pre-mRNA 3'-end. Involved in histone pre-mRNA processing during the S-phase of the cell cycle, which is required for entering/progressing through S-phase. Cleaves histone pre-mRNA at a major and a minor cleavage site after the 5'-ACCCA-3' and the 5'-ACCCACA-3' sequence, respectively, and located downstream of the stem-loop. May require the presence of the HDE element located at the histone pre-RNA 3'-end to avoid non-specific cleavage. This chain is Metallo-beta-lactamase domain-containing protein 1 (Mblac1), found in Rattus norvegicus (Rat).